The following is a 214-amino-acid chain: MSGRFISFEGPDGAGKTSVLTAIRTGLVNQLGDQVVYTREPGGNPIAEQVRAVLLDKQNGAMDDWTEALLYAASRRQHVVETLKPALEAGKLILCDRYLDSSIAYQGGGRELGIDRIWELNQYAIDGLLPDLTIFLDLPVETGLARIEKGRAETINRLDEQTTNFHRRVRQAYLTLAERFPERIVKVNADQELARVIEDVRSAIHARYADLFTN.

ATP is bound at residue 10 to 17; sequence GPDGAGKT.

This sequence belongs to the thymidylate kinase family.

It carries out the reaction dTMP + ATP = dTDP + ADP. Functionally, phosphorylation of dTMP to form dTDP in both de novo and salvage pathways of dTTP synthesis. In Limosilactobacillus fermentum (strain NBRC 3956 / LMG 18251) (Lactobacillus fermentum), this protein is Thymidylate kinase.